The chain runs to 294 residues: Histone deacetylase HDT3 (294 aa).

Methionine 1 bears the N-acetylmethionine mark. Positions 2–5 (EFWG) are required to repress transcription. Residues 124-269 (QVNFQLPNED…TPKSAGAFGC (146 aa)) form a disordered region. Acidic residues predominate over residues 140-188 (DDADGSEEDSSDDDDSENSGDEEEEKVTAESDSEEDDSSDDEEDDSSEE). The span at 189-202 (ETPKKPEEPKKRSA) shows a compositional bias: basic and acidic residues. Over residues 203 to 213 (EPNSSKNPASN) the composition is skewed to low complexity. The segment covering 252-262 (GETSKQQQTPK) has biased composition (polar residues). The C2H2-type zinc-finger motif lies at 267–290 (FGCKSCTRTFTSEMGLQSHTKAKH).

This sequence belongs to the histone deacetylase HD2 family. Interacts with DNMT2. As to expression, expressed in leaves, roots, stems, young plantlets, flowers and siliques. Highest levels in ovules, embryos, shoot apical meristems and first leaves. Also expressed in somatic embryos.

Its subcellular location is the nucleus. It localises to the nucleolus. Probably mediates the deacetylation of lysine residues on the N-terminal part of the core histones (H2A, H2B, H3 and H4). Histone deacetylation gives a tag for epigenetic repression and plays an important role in transcriptional regulation, cell cycle progression and developmental events. Involved in the modulation of abscisic acid and stress-responsive genes. In Arabidopsis thaliana (Mouse-ear cress), this protein is Histone deacetylase HDT3 (HDT3).